Consider the following 832-residue polypeptide: WD repeat-containing protein 75 (832 aa).

WD repeat units follow at residues 4–43, 47–86, 90–131, 145–184, 193–230, 236–275, 278–317, 323–361, 375–424, 431–477, 490–528, 532–572, and 577–614; these read QCQI…KVYS, EECI…KLWD, GILI…QLVS, KEIS…YYFK, LKAT…RLWR, KEYT…VQWP, SEEK…SIID, SGII…QFYS, QQEF…KLWE, SFVL…KVWM, SWLC…TVWE, WDLK…CCWN, and ALEW…FLFQ. Residues 764–798 form a disordered region; it reads SQSTEESKEDEEMKSEHSEADSSDETEEMESQKRF.

As to quaternary structure, component of the proposed t-UTP subcomplex of the ribosomal small subunit (SSU) processome. SSU processome is composed of more than 70 proteins and the RNA chaperone small nucleolar RNA (snoRNA) U3.

The protein localises to the nucleus. It is found in the nucleolus. Its function is as follows. Ribosome biogenesis factor. Part of the small subunit (SSU) processome, first precursor of the small eukaryotic ribosomal subunit. During the assembly of the SSU processome in the nucleolus, many ribosome biogenesis factors, an RNA chaperone and ribosomal proteins associate with the nascent pre-rRNA and work in concert to generate RNA folding, modifications, rearrangements and cleavage as well as targeted degradation of pre-ribosomal RNA by the RNA exosome. Involved in nucleolar processing of pre-18S ribosomal RNA. Required for optimal pre-ribosomal RNA transcription by RNA polymerase I. This is WD repeat-containing protein 75 (wdr75) from Xenopus laevis (African clawed frog).